The chain runs to 326 residues: Beta-ketoacyl-[acyl-carrier-protein] synthase III (326 aa).

Residues Cys-113 and His-253 contribute to the active site. Residues 254–258 are ACP-binding; sequence QANIR. Asn-283 is an active-site residue.

Belongs to the thiolase-like superfamily. FabH family. As to quaternary structure, homodimer.

The protein localises to the cytoplasm. It catalyses the reaction malonyl-[ACP] + acetyl-CoA + H(+) = 3-oxobutanoyl-[ACP] + CO2 + CoA. Its pathway is lipid metabolism; fatty acid biosynthesis. In terms of biological role, catalyzes the condensation reaction of fatty acid synthesis by the addition to an acyl acceptor of two carbons from malonyl-ACP. Catalyzes the first condensation reaction which initiates fatty acid synthesis and may therefore play a role in governing the total rate of fatty acid production. Possesses both acetoacetyl-ACP synthase and acetyl transacylase activities. Its substrate specificity determines the biosynthesis of branched-chain and/or straight-chain of fatty acids. In Wolbachia sp. subsp. Brugia malayi (strain TRS), this protein is Beta-ketoacyl-[acyl-carrier-protein] synthase III.